Consider the following 430-residue polypeptide: Adenylosuccinate synthetase (430 aa).

Residues G12–K18 and G40–T42 contribute to the GTP site. The active-site Proton acceptor is D13. Mg(2+) contacts are provided by D13 and G40. IMP contacts are provided by residues D13–K16, N38–H41, T128, R142, Q223, T238, and R302. Residue H41 is the Proton donor of the active site. T298 to R304 lines the substrate pocket. GTP-binding positions include R304, S330 to D332, and S412 to G414.

It belongs to the adenylosuccinate synthetase family. In terms of assembly, homodimer. Mg(2+) serves as cofactor.

Its subcellular location is the cytoplasm. It carries out the reaction IMP + L-aspartate + GTP = N(6)-(1,2-dicarboxyethyl)-AMP + GDP + phosphate + 2 H(+). The protein operates within purine metabolism; AMP biosynthesis via de novo pathway; AMP from IMP: step 1/2. Plays an important role in the de novo pathway of purine nucleotide biosynthesis. Catalyzes the first committed step in the biosynthesis of AMP from IMP. This chain is Adenylosuccinate synthetase, found in Streptococcus equi subsp. zooepidemicus (strain H70).